Consider the following 201-residue polypeptide: Peptidyl-tRNA hydrolase (201 aa).

A tRNA-binding site is contributed by tyrosine 14. Catalysis depends on histidine 19, which acts as the Proton acceptor. Tyrosine 64, asparagine 66, and asparagine 112 together coordinate tRNA.

It belongs to the PTH family. Monomer.

It is found in the cytoplasm. It catalyses the reaction an N-acyl-L-alpha-aminoacyl-tRNA + H2O = an N-acyl-L-amino acid + a tRNA + H(+). In terms of biological role, hydrolyzes ribosome-free peptidyl-tRNAs (with 1 or more amino acids incorporated), which drop off the ribosome during protein synthesis, or as a result of ribosome stalling. Its function is as follows. Catalyzes the release of premature peptidyl moieties from peptidyl-tRNA molecules trapped in stalled 50S ribosomal subunits, and thus maintains levels of free tRNAs and 50S ribosomes. The protein is Peptidyl-tRNA hydrolase of Rhodopseudomonas palustris (strain BisB18).